A 212-amino-acid polypeptide reads, in one-letter code: HTH-type transcriptional repressor KstR (212 aa).

Positions 1–11 are enriched in low complexity; the sequence is MTTSSRSRSST. Residues 1–28 form a disordered region; it reads MTTSSRSRSSTVAAATLGEDDLSSNAQK. Positions 28–88 constitute an HTH tetR-type domain; sequence KERRKRILDA…SALAREFERI (61 aa). Positions 51 to 70 form a DNA-binding region, H-T-H motif; the sequence is QMRAVAERADVAVGTLYRYF.

Homodimer.

Functionally, controls the expression of genes used for utilizing diverse lipids as energy sources. In Rhodococcus jostii (strain RHA1), this protein is HTH-type transcriptional repressor KstR (kstR).